A 725-amino-acid chain; its full sequence is Manganese-exporting P-type ATPase (725 aa).

The HMA domain maps to 25 to 92; sequence GRMRIQIEWV…AISGAAHVAA (68 aa). The next 6 membrane-spanning stretches (helical) occupy residues 101–119, 142–160, 165–179, 188–202, 335–359, and 365–383; these read HSSD…GAAA, LVAS…RGAL, TGTD…IASL, LAVL…YLQD, VGEN…AITK, and MTVL…TPTA. The active-site 4-aspartylphosphate intermediate is Asp416. Residues Asp416, Thr418, and Asp618 each contribute to the Mg(2+) site. 2 helical membrane-spanning segments follow: residues 669–688 and 698–717; these read AVEV…AAGL and PVLA…ANSS.

The protein belongs to the cation transport ATPase (P-type) (TC 3.A.3) family. Type IB subfamily.

Its subcellular location is the cell membrane. The catalysed reaction is Mn(2+)(in) + ATP + H2O = Mn(2+)(out) + ADP + phosphate + H(+). High affinity, slow turnover Mn(2+) transporting ATPase. In Mycobacterium leprae (strain TN), this protein is Manganese-exporting P-type ATPase (ctpC).